Here is a 99-residue protein sequence, read N- to C-terminus: Large ribosomal subunit protein bL21 (99 aa).

The protein belongs to the bacterial ribosomal protein bL21 family. Part of the 50S ribosomal subunit. Contacts protein L20.

In terms of biological role, this protein binds to 23S rRNA in the presence of protein L20. The polypeptide is Large ribosomal subunit protein bL21 (Deinococcus geothermalis (strain DSM 11300 / CIP 105573 / AG-3a)).